Consider the following 322-residue polypeptide: Fructose-1,6-bisphosphatase class 1 1 (322 aa).

4 residues coordinate Mg(2+): glutamate 84, aspartate 103, leucine 105, and aspartate 106. Substrate-binding positions include 106–109 (DGSS), asparagine 198, and lysine 264. Glutamate 270 lines the Mg(2+) pocket.

Belongs to the FBPase class 1 family. As to quaternary structure, homotetramer. Mg(2+) serves as cofactor.

It is found in the cytoplasm. It catalyses the reaction beta-D-fructose 1,6-bisphosphate + H2O = beta-D-fructose 6-phosphate + phosphate. It participates in carbohydrate biosynthesis; gluconeogenesis. This chain is Fructose-1,6-bisphosphatase class 1 1, found in Pseudoalteromonas translucida (strain TAC 125).